Here is a 401-residue protein sequence, read N- to C-terminus: MNEVAIPSVLLDVPVPAATVHKQNLLDLDREGLEHFFADTLGEARYRAHQMMKWIHHRYVTDFDQMTDLGKALRAKLHQHAEVLVPNVVFDKPSTDGTHKWLLAMGTDGKNAIETVYIPDKGRGTLCVSSQVGCGLNCTFCSTATQGFNRNLTTAEIIGQVWVAARHLGNVPHQQRRLTNVVMMGMGEPLMNFDNVVRAMSVMRDDLGYGLASKRVTLSTSGLVPMIDRLATESDVSLAVSLHAANDALRESLVPLNKKYPIAELMESCARYLRGNKKRDSVTFEYTLMKGINDQPEHARQLARLMRQFDNAVQSKDAGKVNLIPFNPFPGTRYERSGETEIRAFQKILLDAQVLTMVRRTRGDDIDAACGQLKGQVMDRTRRQAEFRRTLEGQADRDAAA.

E114 serves as the catalytic Proton acceptor. A Radical SAM core domain is found at 120–365 (DKGRGTLCVS…TMVRRTRGDD (246 aa)). An intrachain disulfide couples C127 to C370. Residues C134, C138, and C141 each coordinate [4Fe-4S] cluster. S-adenosyl-L-methionine-binding positions include 187 to 188 (GE), S219, 241 to 243 (SLH), and N327. The S-methylcysteine intermediate role is filled by C370.

This sequence belongs to the radical SAM superfamily. RlmN family. [4Fe-4S] cluster is required as a cofactor.

It localises to the cytoplasm. It catalyses the reaction adenosine(2503) in 23S rRNA + 2 reduced [2Fe-2S]-[ferredoxin] + 2 S-adenosyl-L-methionine = 2-methyladenosine(2503) in 23S rRNA + 5'-deoxyadenosine + L-methionine + 2 oxidized [2Fe-2S]-[ferredoxin] + S-adenosyl-L-homocysteine. It carries out the reaction adenosine(37) in tRNA + 2 reduced [2Fe-2S]-[ferredoxin] + 2 S-adenosyl-L-methionine = 2-methyladenosine(37) in tRNA + 5'-deoxyadenosine + L-methionine + 2 oxidized [2Fe-2S]-[ferredoxin] + S-adenosyl-L-homocysteine. Functionally, specifically methylates position 2 of adenine 2503 in 23S rRNA and position 2 of adenine 37 in tRNAs. m2A2503 modification seems to play a crucial role in the proofreading step occurring at the peptidyl transferase center and thus would serve to optimize ribosomal fidelity. In Xanthomonas campestris pv. campestris (strain B100), this protein is Dual-specificity RNA methyltransferase RlmN.